The sequence spans 155 residues: SsrA-binding protein (155 aa).

Belongs to the SmpB family.

It localises to the cytoplasm. Functionally, required for rescue of stalled ribosomes mediated by trans-translation. Binds to transfer-messenger RNA (tmRNA), required for stable association of tmRNA with ribosomes. tmRNA and SmpB together mimic tRNA shape, replacing the anticodon stem-loop with SmpB. tmRNA is encoded by the ssrA gene; the 2 termini fold to resemble tRNA(Ala) and it encodes a 'tag peptide', a short internal open reading frame. During trans-translation Ala-aminoacylated tmRNA acts like a tRNA, entering the A-site of stalled ribosomes, displacing the stalled mRNA. The ribosome then switches to translate the ORF on the tmRNA; the nascent peptide is terminated with the 'tag peptide' encoded by the tmRNA and targeted for degradation. The ribosome is freed to recommence translation, which seems to be the essential function of trans-translation. This Streptococcus equi subsp. equi (strain 4047) protein is SsrA-binding protein.